The following is a 381-amino-acid chain: Metacaspase-8 (381 aa).

Residues H86 and C140 contribute to the active site. The residue at position 140 (C140) is an S-nitrosocysteine.

This sequence belongs to the peptidase C14B family. Post-translationally, proteolytically processed; by an autocatalytic mechanism.

Functionally, cysteine protease that cleaves specifically after arginine residues. Does not cleave caspase-specific substrates. May be involved in the modulation of programmed cell death activated by oxidative stress. In Arabidopsis thaliana (Mouse-ear cress), this protein is Metacaspase-8 (AMC8).